A 167-amino-acid chain; its full sequence is Endoribonuclease YbeY (167 aa).

Positions 131, 135, and 141 each coordinate Zn(2+).

Belongs to the endoribonuclease YbeY family. The cofactor is Zn(2+).

Its subcellular location is the cytoplasm. Single strand-specific metallo-endoribonuclease involved in late-stage 70S ribosome quality control and in maturation of the 3' terminus of the 16S rRNA. This is Endoribonuclease YbeY from Rickettsia africae (strain ESF-5).